Reading from the N-terminus, the 328-residue chain is 4-hydroxy-3-methylbut-2-enyl diphosphate reductase (328 aa).

Cysteine 13 is a [4Fe-4S] cluster binding site. Residues histidine 41 and histidine 75 each coordinate (2E)-4-hydroxy-3-methylbut-2-enyl diphosphate. Residues histidine 41 and histidine 75 each coordinate dimethylallyl diphosphate. The isopentenyl diphosphate site is built by histidine 41 and histidine 75. Cysteine 97 provides a ligand contact to [4Fe-4S] cluster. Histidine 125 provides a ligand contact to (2E)-4-hydroxy-3-methylbut-2-enyl diphosphate. Histidine 125 contributes to the dimethylallyl diphosphate binding site. An isopentenyl diphosphate-binding site is contributed by histidine 125. Glutamate 127 (proton donor) is an active-site residue. Threonine 168 is a (2E)-4-hydroxy-3-methylbut-2-enyl diphosphate binding site. Cysteine 229 lines the [4Fe-4S] cluster pocket. (2E)-4-hydroxy-3-methylbut-2-enyl diphosphate is bound by residues serine 257, serine 258, asparagine 259, and serine 306. Dimethylallyl diphosphate-binding residues include serine 257, serine 258, asparagine 259, and serine 306. Residues serine 257, serine 258, asparagine 259, and serine 306 each coordinate isopentenyl diphosphate.

This sequence belongs to the IspH family. [4Fe-4S] cluster serves as cofactor.

It carries out the reaction isopentenyl diphosphate + 2 oxidized [2Fe-2S]-[ferredoxin] + H2O = (2E)-4-hydroxy-3-methylbut-2-enyl diphosphate + 2 reduced [2Fe-2S]-[ferredoxin] + 2 H(+). The enzyme catalyses dimethylallyl diphosphate + 2 oxidized [2Fe-2S]-[ferredoxin] + H2O = (2E)-4-hydroxy-3-methylbut-2-enyl diphosphate + 2 reduced [2Fe-2S]-[ferredoxin] + 2 H(+). It participates in isoprenoid biosynthesis; dimethylallyl diphosphate biosynthesis; dimethylallyl diphosphate from (2E)-4-hydroxy-3-methylbutenyl diphosphate: step 1/1. The protein operates within isoprenoid biosynthesis; isopentenyl diphosphate biosynthesis via DXP pathway; isopentenyl diphosphate from 1-deoxy-D-xylulose 5-phosphate: step 6/6. Its function is as follows. Catalyzes the conversion of 1-hydroxy-2-methyl-2-(E)-butenyl 4-diphosphate (HMBPP) into a mixture of isopentenyl diphosphate (IPP) and dimethylallyl diphosphate (DMAPP). Acts in the terminal step of the DOXP/MEP pathway for isoprenoid precursor biosynthesis. The chain is 4-hydroxy-3-methylbut-2-enyl diphosphate reductase from Chlorobium phaeobacteroides (strain DSM 266 / SMG 266 / 2430).